The following is an 871-amino-acid chain: Protein translocase subunit SecA (871 aa).

ATP is bound by residues Gln80, 98–102 (GEGKT), and Asp537. Residues 852 to 871 (MEKGKKKGGSHGLGKIRVKR) form a disordered region. Positions 855-871 (GKKKGGSHGLGKIRVKR) are enriched in basic residues.

This sequence belongs to the SecA family. As to quaternary structure, monomer and homodimer. Part of the essential Sec protein translocation apparatus which comprises SecA, SecYEG and auxiliary proteins SecDF. Other proteins may also be involved.

It is found in the cell inner membrane. Its subcellular location is the cytoplasm. The catalysed reaction is ATP + H2O + cellular proteinSide 1 = ADP + phosphate + cellular proteinSide 2.. Functionally, part of the Sec protein translocase complex. Interacts with the SecYEG preprotein conducting channel. Has a central role in coupling the hydrolysis of ATP to the transfer of proteins into and across the cell membrane, serving as an ATP-driven molecular motor driving the stepwise translocation of polypeptide chains across the membrane. This chain is Protein translocase subunit SecA, found in Thermotoga neapolitana (strain ATCC 49049 / DSM 4359 / NBRC 107923 / NS-E).